The sequence spans 242 residues: Myogenic factor 6 (242 aa).

The tract at residues 31-63 is disordered; sequence SPLYPGSDGTLSPCQDQMPPEAGSDSSGEEHVL. The bHLH domain maps to 93–144; it reads DRRKAATLRERRRLKKINEAFEALKRRTVANPNQRLPKVEILRSAISYIERL.

As to quaternary structure, efficient DNA binding requires dimerization with another bHLH protein. Interacts with CSRP3. As to expression, skeletal muscle.

The protein localises to the nucleus. Its function is as follows. Involved in muscle differentiation (myogenic factor). Induces fibroblasts to differentiate into myoblasts. Probable sequence specific DNA-binding protein. This is Myogenic factor 6 (MYF6) from Homo sapiens (Human).